The following is a 123-amino-acid chain: Large ribosomal subunit protein uL14 (123 aa).

This sequence belongs to the universal ribosomal protein uL14 family. As to quaternary structure, part of the 50S ribosomal subunit. Forms a cluster with proteins L3 and L19. In the 70S ribosome, L14 and L19 interact and together make contacts with the 16S rRNA in bridges B5 and B8.

Binds to 23S rRNA. Forms part of two intersubunit bridges in the 70S ribosome. This chain is Large ribosomal subunit protein uL14, found in Corynebacterium jeikeium (strain K411).